Here is a 130-residue protein sequence, read N- to C-terminus: Protein p56 (130 aa).

The protein belongs to the phi29likevirus protein p56 family. Homodimer. Interacts with host UDG; this interaction inhibits the uracil-DNA glycosylase.

Functionally, inhibits the host uracil-DNA glycosylase (UDG), an enzyme which removes uracil residues from DNA by the base excision repair. Interacts with host uracil-DNA glycosylase and prevents the latter from binding to DNA. Since the viral DNA polymerase efficiently incorporates dUMP into DNA, the virus needs to prevent the deleterious effect caused by host UDG when it eliminates uracil residues present in the viral genome. The sequence is that of Protein p56 from Bacillus phage GA-1 (Bacteriophage GA-1).